The chain runs to 238 residues: Uridylate kinase (238 aa).

12-15 provides a ligand contact to ATP; the sequence is KLSG. G54 contacts UMP. The ATP site is built by G55 and R59. Residues D74 and 135-142 each bind UMP; that span reads TGNPFFTT. The ATP site is built by T162, N163, Y168, and D171.

The protein belongs to the UMP kinase family. In terms of assembly, homohexamer.

The protein localises to the cytoplasm. It catalyses the reaction UMP + ATP = UDP + ADP. It functions in the pathway pyrimidine metabolism; CTP biosynthesis via de novo pathway; UDP from UMP (UMPK route): step 1/1. With respect to regulation, inhibited by UTP. Functionally, catalyzes the reversible phosphorylation of UMP to UDP. This chain is Uridylate kinase, found in Rhodopseudomonas palustris (strain BisA53).